We begin with the raw amino-acid sequence, 434 residues long: Trigger factor (434 aa).

The 86-residue stretch at 161 to 246 (KDIVTIDFKG…IHKVEEPQLP (86 aa)) folds into the PPIase FKBP-type domain.

This sequence belongs to the FKBP-type PPIase family. Tig subfamily.

The protein localises to the cytoplasm. It catalyses the reaction [protein]-peptidylproline (omega=180) = [protein]-peptidylproline (omega=0). Functionally, involved in protein export. Acts as a chaperone by maintaining the newly synthesized protein in an open conformation. Functions as a peptidyl-prolyl cis-trans isomerase. This is Trigger factor from Marinobacter nauticus (strain ATCC 700491 / DSM 11845 / VT8) (Marinobacter aquaeolei).